Reading from the N-terminus, the 411-residue chain is Alpha-1-antiproteinase (411 aa).

A signal peptide spans 1 to 24; that stretch reads MAPSISRGLLLLAALCCLAPSFLA. Ser33 is modified (phosphoserine). Asn64, Asn101, and Asn265 each carry an N-linked (GlcNAc...) asparagine glycan. An RCL region spans residues 367–386; sequence GATVVEAVPMSLPPQVKFDH. Position 377 is a phosphoserine (Ser377).

This sequence belongs to the serpin family. As to quaternary structure, interacts with CELA2A. Interacts with ERGIC3 and LMAN1/ERGIC53. Interacts with PRSS1/Trypsin. In terms of tissue distribution, plasma.

The protein resides in the secreted. In terms of biological role, inhibitor of serine proteases. The primary target is elastase, but also has a moderate affinity for plasmin and thrombin. This chain is Alpha-1-antiproteinase (Serpina1), found in Rattus norvegicus (Rat).